The primary structure comprises 284 residues: 4-hydroxybenzoate octaprenyltransferase (284 aa).

Transmembrane regions (helical) follow at residues 19 to 39 (IGSL…AQGL), 42 to 62 (LRVL…GCVI), 93 to 113 (LLLF…MNTL), 114 to 134 (TIQL…MKRF), 136 to 156 (HLPQ…AWAA), 158 to 178 (ANTL…WTIA), 210 to 230 (IIGL…QGLA), 233 to 253 (TSYY…QHLI), and 264 to 284 (AFLN…LSVW).

The protein belongs to the UbiA prenyltransferase family. Mg(2+) serves as cofactor.

It localises to the cell inner membrane. The enzyme catalyses all-trans-octaprenyl diphosphate + 4-hydroxybenzoate = 4-hydroxy-3-(all-trans-octaprenyl)benzoate + diphosphate. It participates in cofactor biosynthesis; ubiquinone biosynthesis. Catalyzes the prenylation of para-hydroxybenzoate (PHB) with an all-trans polyprenyl group. Mediates the second step in the final reaction sequence of ubiquinone-8 (UQ-8) biosynthesis, which is the condensation of the polyisoprenoid side chain with PHB, generating the first membrane-bound Q intermediate 3-octaprenyl-4-hydroxybenzoate. This Vibrio cholerae serotype O1 (strain ATCC 39541 / Classical Ogawa 395 / O395) protein is 4-hydroxybenzoate octaprenyltransferase.